Here is a 130-residue protein sequence, read N- to C-terminus: T-cell receptor alpha chain V region PHDS58 (130 aa).

Residues 1–20 (MLLALLPVLGIHFVLRDAQA) form the signal peptide. The segment at 21 to 114 (QSVTQPDARV…SAVYFCAVSG (94 aa)) is v segment. N90 carries N-linked (GlcNAc...) asparagine glycosylation. The tract at residues 115–130 (FASALTFGSGTKVIVL) is j segment.

This Mus musculus (Mouse) protein is T-cell receptor alpha chain V region PHDS58.